Reading from the N-terminus, the 269-residue chain is Surfeit locus protein 4 (269 aa).

The next 5 helical transmembrane spans lie at 64–84, 92–112, 179–199, 203–223, and 242–262; these read FLAT…CVLI, YACF…SILW, FFSI…AIGF, LAAL…NAFW, and TTSV…GVSM. The short motif at 266 to 269 is the Di-lysine motif element; it reads KKEW.

It belongs to the SURF4 family.

The protein localises to the endoplasmic reticulum membrane. The protein resides in the endoplasmic reticulum-Golgi intermediate compartment membrane. Its subcellular location is the golgi apparatus membrane. In terms of biological role, endoplasmic reticulum cargo receptor that mediates the export of lipoproteins by recruiting cargos into COPII vesicles to facilitate their secretion. Acts as a cargo receptor for lipoproteins bearing both APOB and APOA1, thereby regulating lipoprotein delivery and the maintenance of lipid homeostasis. This Takifugu rubripes (Japanese pufferfish) protein is Surfeit locus protein 4.